Reading from the N-terminus, the 480-residue chain is Glycogen synthase (480 aa).

Lys-15 is a binding site for ADP-alpha-D-glucose.

This sequence belongs to the glycosyltransferase 1 family. Bacterial/plant glycogen synthase subfamily.

It carries out the reaction [(1-&gt;4)-alpha-D-glucosyl](n) + ADP-alpha-D-glucose = [(1-&gt;4)-alpha-D-glucosyl](n+1) + ADP + H(+). It participates in glycan biosynthesis; glycogen biosynthesis. Its function is as follows. Synthesizes alpha-1,4-glucan chains using ADP-glucose. The polypeptide is Glycogen synthase (Clostridioides difficile (strain 630) (Peptoclostridium difficile)).